The chain runs to 695 residues: FMR1-interacting protein NUFIP2 (695 aa).

Residues 1-100 (MEEKPGQPQP…KTGYGELNGN (100 aa)) form a disordered region. 2 stretches are compositionally biased toward basic residues: residues 11–23 (QHHHSHHHPHHHP) and 30–53 (PHHHHHYYFYNHSHNHHHHHHHQQ). A Glycyl lysine isopeptide (Lys-Gly) (interchain with G-Cter in SUMO2) cross-link involves residue Lys-78. A Phosphothreonine modification is found at Thr-87. Lys-109 participates in a covalent cross-link: Glycyl lysine isopeptide (Lys-Gly) (interchain with G-Cter in SUMO2). Phosphoserine is present on residues Ser-112 and Ser-113. Residues Lys-136, Lys-146, Lys-157, and Lys-171 each participate in a glycyl lysine isopeptide (Lys-Gly) (interchain with G-Cter in SUMO2) cross-link. Disordered stretches follow at residues 155-189 (IQKNSMDKKNGKSYENKSGENQSVDKSDTIPIPNG), 204-234 (GKGADNDGSGSESGYTTPKKRKARRNSAKGC), 261-341 (FKPD…KPPP), and 369-402 (TIQNSSVSPTSSSSSSSSTGETQTQSSSRLSQVP). Basic and acidic residues predominate over residues 159-182 (SMDKKNGKSYENKSGENQSVDKSD). Residues Ser-212 and Ser-214 each carry the phosphoserine modification. The residue at position 218 (Tyr-218) is a Phosphotyrosine. 2 positions are modified to phosphothreonine: Thr-219 and Thr-220. Positions 221 to 230 (PKKRKARRNS) are enriched in basic residues. Over residues 261-275 (FKPDYSEQKGNRVDG) the composition is skewed to basic and acidic residues. Residues Lys-262 and Lys-281 each participate in a glycyl lysine isopeptide (Lys-Gly) (interchain with G-Cter in SUMO2) cross-link. Arg-291 is subject to Omega-N-methylarginine. Lys-293 participates in a covalent cross-link: Glycyl lysine isopeptide (Lys-Gly) (interchain with G-Cter in SUMO2). Ser-304 carries the phosphoserine modification. A Glycyl lysine isopeptide (Lys-Gly) (interchain with G-Cter in SUMO2) cross-link involves residue Lys-307. A compositionally biased stretch (low complexity) spans 373–396 (SSVSPTSSSSSSSSTGETQTQSSS). Ser-376 is modified (phosphoserine). Phosphothreonine is present on Thr-571. A phosphoserine mark is found at Ser-572, Ser-592, Ser-608, and Ser-629. Thr-633 carries the post-translational modification Phosphothreonine. Phosphoserine is present on residues Ser-637, Ser-652, Ser-655, and Ser-692.

As to quaternary structure, interacts with FMR1 (via N-terminus). Interacts with DDX6.

It is found in the nucleus. Its subcellular location is the cytoplasm. The protein resides in the stress granule. Its function is as follows. Binds RNA. The protein is FMR1-interacting protein NUFIP2 of Homo sapiens (Human).